A 122-amino-acid polypeptide reads, in one-letter code: Large ribosomal subunit protein uL14 (122 aa).

It belongs to the universal ribosomal protein uL14 family. As to quaternary structure, part of the 50S ribosomal subunit. Forms a cluster with proteins L3 and L19. In the 70S ribosome, L14 and L19 interact and together make contacts with the 16S rRNA in bridges B5 and B8.

Functionally, binds to 23S rRNA. Forms part of two intersubunit bridges in the 70S ribosome. The polypeptide is Large ribosomal subunit protein uL14 (Pseudomonas aeruginosa (strain LESB58)).